The following is a 226-amino-acid chain: MLTWLQRDSFQFPPLAKAMREPNGLLAAGGDLSAERLISAYRHGCFPWFQDGQPILWWSPDPRTVLFPQELHISRSLAKLLRQQRYRVTFDQDFAAVIAACAAPRAYADGTWITRGMQEAYRQLHQRGIAHSVEVWQGEQLVGGLYGLAIGQLFFGESMFSRADNASKVGFATLVGKLQEWGFVLIDCQMPTQHLHSFGARAIPRATFADYLQRHLNLPSRADWLA.

Belongs to the L/F-transferase family.

Its subcellular location is the cytoplasm. The catalysed reaction is N-terminal L-lysyl-[protein] + L-leucyl-tRNA(Leu) = N-terminal L-leucyl-L-lysyl-[protein] + tRNA(Leu) + H(+). It catalyses the reaction N-terminal L-arginyl-[protein] + L-leucyl-tRNA(Leu) = N-terminal L-leucyl-L-arginyl-[protein] + tRNA(Leu) + H(+). The enzyme catalyses L-phenylalanyl-tRNA(Phe) + an N-terminal L-alpha-aminoacyl-[protein] = an N-terminal L-phenylalanyl-L-alpha-aminoacyl-[protein] + tRNA(Phe). Its function is as follows. Functions in the N-end rule pathway of protein degradation where it conjugates Leu, Phe and, less efficiently, Met from aminoacyl-tRNAs to the N-termini of proteins containing an N-terminal arginine or lysine. This is Leucyl/phenylalanyl-tRNA--protein transferase from Ectopseudomonas mendocina (strain ymp) (Pseudomonas mendocina).